We begin with the raw amino-acid sequence, 431 residues long: Tol-Pal system protein TolB (431 aa).

The signal sequence occupies residues 1–26 (MSLMTKLGFRALVASCLITAGSAANA). A disordered region spans residues 406 to 431 (DGSAPPQILSVQGGSVREPSWGPFMQ).

This sequence belongs to the TolB family. In terms of assembly, the Tol-Pal system is composed of five core proteins: the inner membrane proteins TolA, TolQ and TolR, the periplasmic protein TolB and the outer membrane protein Pal. They form a network linking the inner and outer membranes and the peptidoglycan layer.

The protein localises to the periplasm. Its function is as follows. Part of the Tol-Pal system, which plays a role in outer membrane invagination during cell division and is important for maintaining outer membrane integrity. This is Tol-Pal system protein TolB from Burkholderia cenocepacia (strain ATCC BAA-245 / DSM 16553 / LMG 16656 / NCTC 13227 / J2315 / CF5610) (Burkholderia cepacia (strain J2315)).